The following is a 508-amino-acid chain: Erythropoietin receptor (508 aa).

The N-terminal stretch at 1 to 24 (MNHLWTHLWPGVGSLCLLLAGAAW) is a signal peptide. Residues 25-250 (ASLPKPLDPK…SLLTASDLDP (226 aa)) are Extracellular-facing. An intrachain disulfide couples C52 to C62. N76 is a glycosylation site (N-linked (GlcNAc...) asparagine). The cysteines at positions 91 and 107 are disulfide-linked. In terms of domain architecture, Fibronectin type-III spans 148–247 (PPAGLLARRA…EPASLLTASD (100 aa)). An N-linked (GlcNAc...) asparagine glycan is attached at N184. A WSXWS motif motif is present at residues 233–237 (WSAWS). A helical transmembrane segment spans residues 251–273 (LILTLSLILVLILLLLAVLALLS). Over 274 to 508 (HRRTLKQKIW…PSPPGYVACS (235 aa)) the chain is Cytoplasmic. K281 participates in a covalent cross-link: Glycyl lysine isopeptide (Lys-Gly) (interchain with G-Cter in ubiquitin). The Box 1 motif signature appears at 282 to 290 (IWPGIPSPE). A phosphotyrosine; by JAK2 mark is found at Y368 and Y426. The ITIM motif motif lies at 452–457 (IKYLYL). Residue K453 forms a Glycyl lysine isopeptide (Lys-Gly) (interchain with G-Cter in ubiquitin) linkage. Residues Y454, Y456, Y468, Y489, and Y504 each carry the phosphotyrosine; by JAK2 modification. A disordered region spans residues 467-508 (DYSSGGSQGAQGDSLNSPFLNPYENSLIPAPEPSPPGYVACS).

Belongs to the type I cytokine receptor family. Type 1 subfamily. Forms homodimers on EPO stimulation. The tyrosine-phosphorylated form interacts with several SH2 domain-containing proteins including LYN, the adapter protein SH2B2, PTPN6, PTPN11, JAK2, PI3 kinases, STAT5A/B, SOCS3, CRKL. Interacts with INPP5D/SHIP1. SH2B2 binding inhibits the JAK-STAT signaling. Interacts with RHEX; this interaction occurs in a erythropoietin (EPO)-dependent manner. Interacts with ATXN2L. In terms of processing, on EPO stimulation, phosphorylated on C-terminal tyrosine residues by JAK2. The phosphotyrosine motifs are also recruitment sites for several SH2-containing proteins and adapter proteins which mediate cell proliferation. Phosphorylation on Tyr-454 is required for PTPN6 interaction, Tyr-426 for PTPN11. Tyr-426 is also required for SOCS3 binding, but Tyr-454/Tyr-456 motif is the preferred binding site. Post-translationally, ubiquitinated by the ECS(SOCS2) complex following ligand-binding and phosphorylation by JAK2, leading to its degradation by the proteasome. Regulation by the ECS(SOCS2) complex acts as a negative feedback loop of erythropoietin-mediated signaling pathway. Ubiquitination at Lys-281 mediates receptor internalization, whereas ubiquitination at Lys-453 promotes trafficking of activated receptors to the lysosomes for degradation. Ubiquitinated by NOSIP; appears to be either multi-monoubiquitinated or polyubiquitinated. Ubiquitination mediates proliferation and survival of EPO-dependent cells.

It localises to the cell membrane. Its function is as follows. Receptor for erythropoietin, which mediates erythropoietin-induced erythroblast proliferation and differentiation. Upon EPO stimulation, EPOR dimerizes triggering the JAK2/STAT5 signaling cascade. In some cell types, can also activate STAT1 and STAT3. May also activate the LYN tyrosine kinase. In terms of biological role, isoform EPOR-T acts as a dominant-negative receptor of EPOR-mediated signaling. This is Erythropoietin receptor (EPOR) from Canis lupus familiaris (Dog).